We begin with the raw amino-acid sequence, 362 residues long: uncharacterized protein (362 aa).

This is an uncharacterized protein from Escherichia coli (strain K12).